An 83-amino-acid polypeptide reads, in one-letter code: Molybdopterin synthase sulfur carrier subunit (83 aa).

Belongs to the MoaD family.

It participates in cofactor biosynthesis; molybdopterin biosynthesis. Involved in sulfur transfer in the conversion of molybdopterin precursor Z to molybdopterin. Probably plays a role in host phagosome maturation arrest. The protein is Molybdopterin synthase sulfur carrier subunit (moaD1) of Mycobacterium tuberculosis (strain ATCC 25618 / H37Rv).